The chain runs to 102 residues: A-type ATP synthase subunit F (102 aa).

The protein belongs to the V-ATPase F subunit family. In terms of assembly, has multiple subunits with at least A(3), B(3), C, D, E, F, H, I and proteolipid K(x).

The protein resides in the cell membrane. Its function is as follows. Component of the A-type ATP synthase that produces ATP from ADP in the presence of a proton gradient across the membrane. This is A-type ATP synthase subunit F from Thermococcus onnurineus (strain NA1).